The sequence spans 175 residues: Mitochondrial inner membrane protease subunit 2 (175 aa).

Residues 19 to 37 (FFVAVPVAVTFLDRVACVA) form a helical membrane-spanning segment. Active-site residues include Ser-43 and Lys-91.

This sequence belongs to the peptidase S26 family. IMP2 subfamily. As to quaternary structure, heterodimer of 2 subunits, IMMPL1 and IMMPL2.

The protein localises to the mitochondrion inner membrane. In terms of biological role, catalyzes the removal of transit peptides required for the targeting of proteins from the mitochondrial matrix, across the inner membrane, into the inter-membrane space. Known to process the nuclear encoded protein DIABLO. This chain is Mitochondrial inner membrane protease subunit 2 (Immp2l), found in Mus musculus (Mouse).